The following is an 87-amino-acid chain: Small ribosomal subunit protein bS20 (87 aa).

Positions M1–L28 are disordered. The span at Q17–L28 shows a compositional bias: basic and acidic residues.

It belongs to the bacterial ribosomal protein bS20 family.

Its function is as follows. Binds directly to 16S ribosomal RNA. In Thiobacillus denitrificans (strain ATCC 25259 / T1), this protein is Small ribosomal subunit protein bS20.